The following is a 597-amino-acid chain: Elongation factor 4 (597 aa).

Residues 2-184 enclose the tr-type G domain; the sequence is DHIRNFSIIA…SLIAKVPPPK (183 aa). Residues 14–19 and 131–134 each bind GTP; these read DHGKST and NKID.

The protein belongs to the TRAFAC class translation factor GTPase superfamily. Classic translation factor GTPase family. LepA subfamily.

Its subcellular location is the cell inner membrane. The catalysed reaction is GTP + H2O = GDP + phosphate + H(+). In terms of biological role, required for accurate and efficient protein synthesis under certain stress conditions. May act as a fidelity factor of the translation reaction, by catalyzing a one-codon backward translocation of tRNAs on improperly translocated ribosomes. Back-translocation proceeds from a post-translocation (POST) complex to a pre-translocation (PRE) complex, thus giving elongation factor G a second chance to translocate the tRNAs correctly. Binds to ribosomes in a GTP-dependent manner. The sequence is that of Elongation factor 4 from Burkholderia lata (strain ATCC 17760 / DSM 23089 / LMG 22485 / NCIMB 9086 / R18194 / 383).